The following is a 272-amino-acid chain: Putative pyruvate, phosphate dikinase regulatory protein 1 (272 aa).

Residue 151–158 (GISRTSKT) participates in ADP binding.

Belongs to the pyruvate, phosphate/water dikinase regulatory protein family. PDRP subfamily.

It catalyses the reaction N(tele)-phospho-L-histidyl/L-threonyl-[pyruvate, phosphate dikinase] + ADP = N(tele)-phospho-L-histidyl/O-phospho-L-threonyl-[pyruvate, phosphate dikinase] + AMP + H(+). It carries out the reaction N(tele)-phospho-L-histidyl/O-phospho-L-threonyl-[pyruvate, phosphate dikinase] + phosphate + H(+) = N(tele)-phospho-L-histidyl/L-threonyl-[pyruvate, phosphate dikinase] + diphosphate. In terms of biological role, bifunctional serine/threonine kinase and phosphorylase involved in the regulation of the pyruvate, phosphate dikinase (PPDK) by catalyzing its phosphorylation/dephosphorylation. The polypeptide is Putative pyruvate, phosphate dikinase regulatory protein 1 (Staphylococcus epidermidis (strain ATCC 35984 / DSM 28319 / BCRC 17069 / CCUG 31568 / BM 3577 / RP62A)).